The following is a 336-amino-acid chain: tRNA-dihydrouridine(20/20a) synthase (336 aa).

Residues 24 to 26 (PMM) and Gln-77 contribute to the FMN site. The active-site Proton donor is Cys-107. FMN is bound by residues Lys-146, His-178, 218-220 (NGG), and 240-241 (GR).

It belongs to the Dus family. DusA subfamily. It depends on FMN as a cofactor.

It carries out the reaction 5,6-dihydrouridine(20) in tRNA + NADP(+) = uridine(20) in tRNA + NADPH + H(+). The enzyme catalyses 5,6-dihydrouridine(20) in tRNA + NAD(+) = uridine(20) in tRNA + NADH + H(+). It catalyses the reaction 5,6-dihydrouridine(20a) in tRNA + NADP(+) = uridine(20a) in tRNA + NADPH + H(+). The catalysed reaction is 5,6-dihydrouridine(20a) in tRNA + NAD(+) = uridine(20a) in tRNA + NADH + H(+). Its function is as follows. Catalyzes the synthesis of 5,6-dihydrouridine (D), a modified base found in the D-loop of most tRNAs, via the reduction of the C5-C6 double bond in target uridines. Specifically modifies U20 and U20a in tRNAs. In Pseudomonas putida (strain ATCC 47054 / DSM 6125 / CFBP 8728 / NCIMB 11950 / KT2440), this protein is tRNA-dihydrouridine(20/20a) synthase.